A 367-amino-acid polypeptide reads, in one-letter code: MLEFPLINDTSRKIIHIDMDAFFAQVEMRDDPSLKDKPVIIGNDPRKTGGRGVVSTCNYEARKYGVHSAMSSKEAYERCPNAVFISGNYSHYREVGMQIREIFKCYTDLVEPMSIDEAYLDVTTNKLGIKSAVKVAKLIQYDIWQELHLTCSAGVSYNKFIAKLASDFQKPAGLTVVLPEEAQDFLEKLPIEKFHGVGKKSVERLHDMDIYTGADLLKISEITLIDRFGRFGFDLFRKARGISNSPVKPNRVRKSIGSERTYGKLLYSEDDIKAELTKNAKQVAESAQKAKKVGRIIVIKVRYSDFSTLTKRMTLDKSTQDFDTIDRISHSIFDQLEENSSGVRLLGVTLTGLEDQEGRQLDLDDLA.

A UmuC domain is found at 14 to 198 (IIHIDMDAFF…LPIEKFHGVG (185 aa)). Mg(2+)-binding residues include Asp18 and Asp116. Glu117 is an active-site residue.

Belongs to the DNA polymerase type-Y family. In terms of assembly, monomer. Mg(2+) serves as cofactor.

It is found in the cytoplasm. The enzyme catalyses DNA(n) + a 2'-deoxyribonucleoside 5'-triphosphate = DNA(n+1) + diphosphate. Poorly processive, error-prone DNA polymerase involved in untargeted mutagenesis. Copies undamaged DNA at stalled replication forks, which arise in vivo from mismatched or misaligned primer ends. These misaligned primers can be extended by PolIV. Exhibits no 3'-5' exonuclease (proofreading) activity. May be involved in translesional synthesis, in conjunction with the beta clamp from PolIII. This chain is DNA polymerase IV, found in Streptococcus thermophilus (strain CNRZ 1066).